The primary structure comprises 232 residues: Small ribosomal subunit protein uS3 (232 aa).

The KH type-2 domain occupies Ile39–Arg107.

The protein belongs to the universal ribosomal protein uS3 family. Part of the 30S ribosomal subunit. Forms a tight complex with proteins S10 and S14.

Binds the lower part of the 30S subunit head. Binds mRNA in the 70S ribosome, positioning it for translation. This is Small ribosomal subunit protein uS3 from Rhodopseudomonas palustris (strain BisB18).